A 148-amino-acid chain; its full sequence is 1,4-dihydroxy-2-naphthoyl-CoA hydrolase (148 aa).

D15 is an active-site residue.

This sequence belongs to the 4-hydroxybenzoyl-CoA thioesterase family. DHNA-CoA hydrolase subfamily.

It catalyses the reaction 1,4-dihydroxy-2-naphthoyl-CoA + H2O = 1,4-dihydroxy-2-naphthoate + CoA + H(+). The protein operates within cofactor biosynthesis; phylloquinone biosynthesis. It functions in the pathway quinol/quinone metabolism; 1,4-dihydroxy-2-naphthoate biosynthesis; 1,4-dihydroxy-2-naphthoate from chorismate: step 7/7. Catalyzes the hydrolysis of 1,4-dihydroxy-2-naphthoyl-CoA (DHNA-CoA) to 1,4-dihydroxy-2-naphthoate (DHNA), a reaction involved in phylloquinone (vitamin K1) biosynthesis. The chain is 1,4-dihydroxy-2-naphthoyl-CoA hydrolase from Nostoc punctiforme (strain ATCC 29133 / PCC 73102).